Consider the following 345-residue polypeptide: GTP 3',8-cyclase (345 aa).

The 227-residue stretch at Ser10–Asp236 folds into the Radical SAM core domain. Arg19 provides a ligand contact to GTP. Positions 26 and 30 each coordinate [4Fe-4S] cluster. An S-adenosyl-L-methionine-binding site is contributed by Tyr32. Cys33 contacts [4Fe-4S] cluster. Residue Arg65 coordinates GTP. Gly69 lines the S-adenosyl-L-methionine pocket. Residue Thr98 coordinates GTP. Ser123 lines the S-adenosyl-L-methionine pocket. Residue Lys172 participates in GTP binding. Met206 provides a ligand contact to S-adenosyl-L-methionine. [4Fe-4S] cluster-binding residues include Cys269 and Cys272. Arg274–Arg276 provides a ligand contact to GTP. Cys286 lines the [4Fe-4S] cluster pocket.

It belongs to the radical SAM superfamily. MoaA family. Monomer and homodimer. Requires [4Fe-4S] cluster as cofactor.

The enzyme catalyses GTP + AH2 + S-adenosyl-L-methionine = (8S)-3',8-cyclo-7,8-dihydroguanosine 5'-triphosphate + 5'-deoxyadenosine + L-methionine + A + H(+). It participates in cofactor biosynthesis; molybdopterin biosynthesis. Catalyzes the cyclization of GTP to (8S)-3',8-cyclo-7,8-dihydroguanosine 5'-triphosphate. The sequence is that of GTP 3',8-cyclase from Synechococcus sp. (strain CC9902).